Reading from the N-terminus, the 495-residue chain is Loline biosynthesis cluster 1 transcription factor lolU1 (495 aa).

Its subcellular location is the nucleus. Functionally, transcriptional regulator that may regulate the expression of the loline biosynthesis cluster 1, one of the 2 clusters involved in the biosynthesis of loline alkaloids, potent insecticidal agents composed of a pyrrolizidine ring system and an uncommon ether bridge linking carbons 2 and 7. The protein is Loline biosynthesis cluster 1 transcription factor lolU1 of Epichloe uncinata (Endophyte fungus).